Here is a 276-residue protein sequence, read N- to C-terminus: NH(3)-dependent NAD(+) synthetase (276 aa).

Residue 43 to 50 participates in ATP binding; it reads GISGGVDS. Asp49 is a binding site for Mg(2+). Arg146 provides a ligand contact to deamido-NAD(+). Thr166 serves as a coordination point for ATP. Glu171 is a binding site for Mg(2+). Deamido-NAD(+)-binding residues include Lys179 and Asp186. Positions 195 and 217 each coordinate ATP. 266–267 lines the deamido-NAD(+) pocket; sequence HK.

It belongs to the NAD synthetase family. Homodimer.

It catalyses the reaction deamido-NAD(+) + NH4(+) + ATP = AMP + diphosphate + NAD(+) + H(+). The protein operates within cofactor biosynthesis; NAD(+) biosynthesis; NAD(+) from deamido-NAD(+) (ammonia route): step 1/1. Catalyzes the ATP-dependent amidation of deamido-NAD to form NAD. Uses ammonia as a nitrogen source. The chain is NH(3)-dependent NAD(+) synthetase from Shewanella baltica (strain OS223).